We begin with the raw amino-acid sequence, 1266 residues long: MWVNPEEVLLANALWITERANPYFILQRRKGHAGDGGGGGGLAGLLVGTLDVVLDSSARVAPYRILYQTPDSLVYWTIACGGSRKEITEHWEWLEQNLLQTLSIFENENDITTFVRGKIQGIIAEYNKINDVKEDDDTEKFKEAIVKFHRLFGMPEEEKLVNYYSCSYWKGKVPRQGWMYLSINHLCFYSFLMGREAKLVIRWVDITQLEKNATLLLPDVIKVSTRSSEHFFSVFLNINETFKLMEQLANIAMRQLLDNEGFEQDRSLPKLKRKSPKKVSALKRDLDARAKSERYRALFRLPKDEKLDGHTDCTLWTPFNKMHILGQMFVSTNYICFTSKEENLCSLIIPLREVTIVEKADSSSVLPSPLSISTRNRMTFLFANLKDRDFLVQRISDFLQQTTSKIYSDKEFAGSYNSSDDEVYSRPSSLVSSSPQRSTSSDADGERQFNLNGNSVPTATQTLMTMYRRRSPEEFNPKLAKEFLKEQAWKIHFAEYGQGICMYRTEKTRELVLKGIPESMRGELWLLLSGAINEKATHPGYYEDLVEKSMGKYNLATEEIERDLHRSLPEHPAFQNEMGIAALRRVLTAYAFRNPNIGYCQAMNIVTSVLLLYAKEEEAFWLLVALCERMLPDYYNTRVVGALVDQGVFEELARDYVPQLYDCMQDLGVISTISLSWFLTLFLSVMPFESAVVVVDCFFYEGIKVIFQLALAVLDANVDKLLNCKDDGEAMTVLGRYLDSVTNKDSTLPPIPHLHSLLSDDVEPYPEVDIFRLIRTSYEKFGTIRADLIEQMRFKQRLKVIQTLEDTTKRNVVRTIVTETSFTIDELEELYALFKAEHLTSCYWGGSSNALDRHDPSLPYLEQYRIDFEQFKGMFALLFPWACGTHSDVLASRLFQLLDENGDSLINFREFVSGLSAACHGDLTEKLKLLYKMHVLPEPSSDQDEPDSAFEATQYFFEDITPECTHVVGLDSRSKQGADDGFVTVSLKPDKGKRANSQENRNYLRLWTPENKSKSKNAKDLPKLNQGQFIELCKTMYNMFSEDPNEQELYHATAAVTSLLLEIGEVGKLFVAQPAKEGGSGGSGPSCHQGIPGVLFPKKGPGQPYVVESVEPLPASLAPDSEEHSLGGQMEDIKLEDSSPRDNGACSSMLISDDDTKDDSSMSSYSVLSAGSHEEDKLHCEDIGEDTVLVRSGQGTAALPRSTSLDRDWAITFEQFLASLLTEPALVKYFDKPVCMMARITSAKNIRMMGKPLTSASDYEISAMSG.

2 GRAM domains span residues 146 to 213 and 293 to 361; these read VKFH…EKNA and ERYR…EKAD. The disordered stretch occupies residues 415 to 456; it reads SYNSSDDEVYSRPSSLVSSSPQRSTSSDADGERQFNLNGNSV. The segment covering 425–441 has biased composition (low complexity); it reads SRPSSLVSSSPQRSTSS. One can recognise a Rab-GAP TBC domain in the interval 515–702; it reads GIPESMRGEL…VVVDCFFYEG (188 aa). In terms of domain architecture, EF-hand spans 886-921; it reads HSDVLASRLFQLLDENGDSLINFREFVSGLSAACHG. Disordered stretches follow at residues 1075 to 1095 and 1132 to 1164; these read AKEG…PGVL and DIKL…SMSS.

Its function is as follows. May act as a GTPase-activating protein for Rab family protein(s). This Homo sapiens (Human) protein is TBC1 domain family member 9 (TBC1D9).